A 368-amino-acid chain; its full sequence is Quinolinate synthase (368 aa).

Iminosuccinate-binding residues include H46 and S63. C110 lines the [4Fe-4S] cluster pocket. Iminosuccinate-binding positions include 141 to 143 (YVN) and S162. A [4Fe-4S] cluster-binding site is contributed by C230. Iminosuccinate contacts are provided by residues 256-258 (HPE) and T273. Residue C320 participates in [4Fe-4S] cluster binding.

This sequence belongs to the quinolinate synthase family. Type 3 subfamily. In terms of assembly, homotrimer. Requires [4Fe-4S] cluster as cofactor.

It is found in the cytoplasm. It carries out the reaction iminosuccinate + dihydroxyacetone phosphate = quinolinate + phosphate + 2 H2O + H(+). It participates in cofactor biosynthesis; NAD(+) biosynthesis; quinolinate from iminoaspartate: step 1/1. Functionally, catalyzes the condensation of iminoaspartate with dihydroxyacetone phosphate to form quinolinate. The sequence is that of Quinolinate synthase from Bacillus subtilis (strain 168).